Consider the following 730-residue polypeptide: Acetylene hydratase (730 aa).

[4Fe-4S] cluster contacts are provided by Cys9 and Cys12. Asp13 is a catalytic residue. Residues Cys16 and Cys46 each coordinate [4Fe-4S] cluster. W-bis(molybdopterin guanine dinucleotide)-binding positions include Lys48, Thr111–Asn114, Cys141, Lys172–Asn173, His177–Trp179, Leu199–Arg202, Tyr218–Asp221, Ser296, Gln300, Ala416–Asn418, Gly422–Tyr423, Tyr442–Gln444, Asp460, Arg465, Phe602–Ser613, Arg606, His676, Asp699, and Arg720.

The protein belongs to the prokaryotic molybdopterin-containing oxidoreductase family. As to quaternary structure, monomer. The cofactor is [4Fe-4S] cluster. It depends on W-bis(molybdopterin guanine dinucleotide) as a cofactor.

The enzyme catalyses acetaldehyde = acetylene + H2O. Catalyzes the hydration of acetylene to form acetaldehyde. Ethylene cannot act as a substrate. The chain is Acetylene hydratase from Syntrophotalea acetylenica (Pelobacter acetylenicus).